Reading from the N-terminus, the 64-residue chain is Defensin beta 4A (64 aa).

The N-terminal stretch at 1 to 23 (MRVLYLLFSFLFIFLMPLPGVFG) is a signal peptide. 3 cysteine pairs are disulfide-bonded: Cys-31–Cys-60, Cys-38–Cys-53, and Cys-43–Cys-61. A phosphatidylinositol 4,5-bisphosphate (PIP2) binding region spans residues 33-48 (KSGAICHPVFCPRRYK).

This sequence belongs to the beta-defensin family. LAP/TAP subfamily. Monomer. Homodimer. In terms of tissue distribution, expressed in lung epithelial cells (at protein level). Expressed in foreskin, lung and trachea. Lower expression in kidney, uterus and salivary gland tissue. Expressed in epithelial cells of the respiratory tract, with higher expression in distal parenchyma of the lung, trachea, and tonsils, and lower expression in pharynx and adenoid, and low expression in tongue and larynx.

It localises to the secreted. In terms of biological role, exhibits antimicrobial activity against Gram-negative bacteria and Gram-positive bacteria, with highest activity against Gram-negative bacteria. Antimicrobial activity against P.aruginosa seems to be salt-sensitive and is reduced with high salt concentrations greater than 25 mM. Also exhibits antimicrobial activity against the yeast C.albicans. Permeabilizes C.albicans cell membranes via targeting plasma membrane lipid phosphatidylinositol 4,5-bisphosphate (PIP2), thereby leading to cell fragmentation and cell death. Acts as a ligand for C-C chemokine receptor CCR6. Binds to CCR6 and induces chemotactic activity of CCR6-expressing cells, such as immature dendritic cells and memory T cells. The protein is Defensin beta 4A (DEFB4A) of Homo sapiens (Human).